The following is a 118-amino-acid chain: uncharacterized protein (118 aa).

This is an uncharacterized protein from Invertebrate iridescent virus 6 (IIV-6).